Consider the following 103-residue polypeptide: UPF0145 protein RSKD131_1772 (103 aa).

It belongs to the UPF0145 family.

The protein is UPF0145 protein RSKD131_1772 of Cereibacter sphaeroides (strain KD131 / KCTC 12085) (Rhodobacter sphaeroides).